The sequence spans 495 residues: Nitrogen fixation regulatory protein (495 aa).

Positions 23–93 constitute a PAS 1 domain; the sequence is HPGLFFTMVE…QEMWQTLLQR (71 aa). One can recognise a PAC domain in the interval 94-148; sequence QPWRGQLINQARDGGLYLVDIDITPVLNPQGELEHYLAMQRDISVSYTLEQRLRN. Residues 151–174 enclose the PAS 2; truncated domain; it reads TLMEAVLNNIPAAVVVVDEQDRVV.

FAD serves as cofactor.

Required for the inhibition of NifA activity in response to oxygen and low level of fixed nitrogen. The chain is Nitrogen fixation regulatory protein (nifL) from Klebsiella pneumoniae.